The primary structure comprises 275 residues: WIMGHMVNAIEQVDEFLDLGANAIEFDVDFDDDGVAKYTHHGIPCDCGRLCTKYAVFTEYLDYVRQVTTPGDPKFRKELVLLALDLKLQRIPSEKAYAAGVDVATKLLDHYWMRGWNGGRAYILLNIPLVEDYEFIRAFKDTLRKEGHEQYNAKVGINFTGNEDLDEIREVLEKLGEDEHIWQADGITSCFPRGTERLKKALEKRDTPGYKYISKVYAWTLVRSSIMRRSLRLGVDGVMSNYPDRVVKVLKEKEFSDKFRLATYADNPWEKFTPI.

His5 is a catalytic residue. Glu25 and Asp27 together coordinate Mg(2+). The active-site Nucleophile is His41. Cystine bridges form between Cys45–Cys51 and Cys47–Cys190. Asp85 is a Mg(2+) binding site.

Belongs to the arthropod phospholipase D family. Class II subfamily. Mg(2+) serves as cofactor. In terms of tissue distribution, expressed by the venom gland.

The protein resides in the secreted. The enzyme catalyses an N-(acyl)-sphingosylphosphocholine = an N-(acyl)-sphingosyl-1,3-cyclic phosphate + choline. The catalysed reaction is an N-(acyl)-sphingosylphosphoethanolamine = an N-(acyl)-sphingosyl-1,3-cyclic phosphate + ethanolamine. It carries out the reaction a 1-acyl-sn-glycero-3-phosphocholine = a 1-acyl-sn-glycero-2,3-cyclic phosphate + choline. It catalyses the reaction a 1-acyl-sn-glycero-3-phosphoethanolamine = a 1-acyl-sn-glycero-2,3-cyclic phosphate + ethanolamine. Dermonecrotic toxins cleave the phosphodiester linkage between the phosphate and headgroup of certain phospholipids (sphingolipid and lysolipid substrates), forming an alcohol (often choline) and a cyclic phosphate. This toxin acts on sphingomyelin (SM). It may also act on ceramide phosphoethanolamine (CPE), lysophosphatidylcholine (LPC) and lysophosphatidylethanolamine (LPE), but not on lysophosphatidylserine (LPS), and lysophosphatidylglycerol (LPG). It acts by transphosphatidylation, releasing exclusively cyclic phosphate products as second products. Induces dermonecrosis, hemolysis, increased vascular permeability, edema, inflammatory response, and platelet aggregation. The protein is Dermonecrotic toxin SpeSicTox-betaIIA2v of Sicarius peruensis (Six-eyed sand spider).